We begin with the raw amino-acid sequence, 230 residues long: Large ribosomal subunit protein uL1 (230 aa).

Belongs to the universal ribosomal protein uL1 family. In terms of assembly, part of the 50S ribosomal subunit.

Functionally, binds directly to 23S rRNA. The L1 stalk is quite mobile in the ribosome, and is involved in E site tRNA release. Its function is as follows. Protein L1 is also a translational repressor protein, it controls the translation of the L11 operon by binding to its mRNA. In Bradyrhizobium sp. (strain ORS 278), this protein is Large ribosomal subunit protein uL1.